We begin with the raw amino-acid sequence, 151 residues long: Late embryogenesis abundant protein Lea14-A (151 aa).

This sequence belongs to the LEA type 2 family.

The chain is Late embryogenesis abundant protein Lea14-A (LEA14-A) from Gossypium hirsutum (Upland cotton).